An 804-amino-acid chain; its full sequence is Leucine--tRNA ligase (804 aa).

Residues 39–50 carry the 'HIGH' region motif; the sequence is PFPSGKGLHVGH. Positions 573 to 577 match the 'KMSKS' region motif; it reads KMSKS. Residue Lys576 coordinates ATP.

The protein belongs to the class-I aminoacyl-tRNA synthetase family.

It localises to the cytoplasm. It catalyses the reaction tRNA(Leu) + L-leucine + ATP = L-leucyl-tRNA(Leu) + AMP + diphosphate. In Lactobacillus acidophilus (strain ATCC 700396 / NCK56 / N2 / NCFM), this protein is Leucine--tRNA ligase.